The chain runs to 165 residues: Transcriptional repressor NrdR (165 aa).

A zinc finger lies at 3-34; sequence CPFCGAQDTRVVDSRLSHEGDQVRRRRECGEC. One can recognise an ATP-cone domain in the interval 49-139; that stretch reads PRVVKSDGSR…VYRRFEDVNQ (91 aa).

Belongs to the NrdR family. Requires Zn(2+) as cofactor.

Functionally, negatively regulates transcription of bacterial ribonucleotide reductase nrd genes and operons by binding to NrdR-boxes. In Methylococcus capsulatus (strain ATCC 33009 / NCIMB 11132 / Bath), this protein is Transcriptional repressor NrdR.